The primary structure comprises 311 residues: Pyrimidine-specific ribonucleoside hydrolase RihA (311 aa).

H240 is a catalytic residue.

It belongs to the IUNH family. RihA subfamily.

Its function is as follows. Hydrolyzes with equal efficiency cytidine or uridine to ribose and cytosine or uracil, respectively. This Escherichia coli O81 (strain ED1a) protein is Pyrimidine-specific ribonucleoside hydrolase RihA.